Consider the following 588-residue polypeptide: 2-isopropylmalate synthase (588 aa).

Residues 40–314 form the Pyruvate carboxyltransferase domain; the sequence is PRWCAVDLRD…DPQIDFSDLD (275 aa). 4 residues coordinate Mg(2+): D49, H253, H255, and N289. Positions 456-588 are regulatory domain; that stretch reads APLDRVEEKW…TVREPELAAV (133 aa).

The protein belongs to the alpha-IPM synthase/homocitrate synthase family. LeuA type 2 subfamily. Homodimer. Mg(2+) is required as a cofactor.

It is found in the cytoplasm. The enzyme catalyses 3-methyl-2-oxobutanoate + acetyl-CoA + H2O = (2S)-2-isopropylmalate + CoA + H(+). It functions in the pathway amino-acid biosynthesis; L-leucine biosynthesis; L-leucine from 3-methyl-2-oxobutanoate: step 1/4. In terms of biological role, catalyzes the condensation of the acetyl group of acetyl-CoA with 3-methyl-2-oxobutanoate (2-ketoisovalerate) to form 3-carboxy-3-hydroxy-4-methylpentanoate (2-isopropylmalate). In Clavibacter sepedonicus (Clavibacter michiganensis subsp. sepedonicus), this protein is 2-isopropylmalate synthase.